Consider the following 386-residue polypeptide: MELSISQSPRVRFSSLAPRFLAASHHHRPSVHLAGKFISLPRDVRFTSLSTSRMRSKFVSTNYRKISIRACSQVGAAESDDPVLDRIARFQNACWRFLRPHTIRGTALGSTALVTRALIENTHLIKWSLVLKALSGLLALICGNGYIVGINQIYDIGIDKVNKPYLPIAAGDLSVQSAWLLVIFFAIAGLLVVGFNFGPFITSLYSLGLFLGTIYSVPPLRMKRFPVAAFLIIATVRGFLLNFGVYHATRAALGLPFQWSAPVAFITSFVTLFALVIAITKDLPDVEGDRKFQISTLATKLGVRNIAFLGSGLLLVNYVSAISLAFYMPQVFRGSLMIPAHVILASGLIFQTWVLEKANYTKEAISGYYRFIWNLFYAEYLLFPFL.

The N-terminal 69 residues, 1 to 69, are a transit peptide targeting the chloroplast; it reads MELSISQSPR…STNYRKISIR (69 aa). 8 helical membrane passes run 130 to 150, 181 to 201, 204 to 220, 225 to 245, 259 to 279, 306 to 326, 335 to 355, and 365 to 385; these read VLKA…IVGI, LVIF…GPFI, LYSL…VPPL, FPVA…NFGV, WSAP…VIAI, IAFL…SLAF, SLMI…TWVL, and ISGY…LFPF.

Belongs to the UbiA prenyltransferase family.

The protein localises to the plastid. Its subcellular location is the chloroplast membrane. It catalyses the reaction all-trans-nonaprenyl diphosphate + homogentisate + H(+) = 2-methyl-6-(all-trans-nonaprenyl)benzene-1,4-diol + CO2 + diphosphate. Its activity is regulated as follows. Inhibited by haloxydine (3,5-dichloro-2,6-difluoro-4-haloxypyridine). Involved in the synthesis of plastoquinone-9. Can use both homogentisic acid and 2,5-dihydroxyphenylacetic acid gamma-lactone as prenyl acceptors, and solanesyl diphosphate &gt; farnesyl diphosphate &gt; geranylgeranyl diphosphate &gt;&gt; phytyl diphosphate as prenyl donors. Do not catalyze the decardoxylation of homogentisate uncoupled from prenylation. This chain is Homogentisate solanesyltransferase, chloroplastic (HST), found in Arabidopsis thaliana (Mouse-ear cress).